Reading from the N-terminus, the 232-residue chain is A-type ATP synthase subunit D (232 aa).

Residues 200–232 (KKIKNKKEAEEEDEDEDESEMTDETVVQTPADD) are disordered. Positions 209–222 (EEEDEDEDESEMTD) are enriched in acidic residues.

This sequence belongs to the V-ATPase D subunit family. In terms of assembly, has multiple subunits with at least A(3), B(3), C, D, E, F, H, I and proteolipid K(x).

The protein localises to the cell membrane. In terms of biological role, component of the A-type ATP synthase that produces ATP from ADP in the presence of a proton gradient across the membrane. The sequence is that of A-type ATP synthase subunit D from Haloquadratum walsbyi (strain DSM 16790 / HBSQ001).